The sequence spans 396 residues: MGANTSRKPPVFDENEDVNFDHFEILRAIGKGSFGKVCIVQKNDTKKMYAMKYMNKQKCVERNEVRNVFKELQIMQGLEHPFLVNLWYSFQDEEDMFMVVDLLLGGDLRYHLQQNVHFKEETVKLFICELVMALDYLQNQRIIHRDMKPDNILLDEHGHVHITDFNIAAMLPRETQITTMAGTKPYMAPEMFSSRKGAGYSFAVDWWSLGVTAYELLRGRRPYHIRSSTSSKEIVHTFETTVVTYPSAWSQEMVSLLKKLLEPNPDQRFSQLSDVQNFPYMNDINWDAVFQKRLIPGFIPNKGRLNCDPTFELEEMILESKPLHKKKKRLAKKEKDMRKCDSSQTCLLQEHLDSVQKEFIIFNREKVNRDFNKRQPNLALEQTKDPQGEDGQNNNL.

Glycine 2 is lipidated: N-myristoyl glycine. The Protein kinase domain occupies 23 to 281 (FEILRAIGKG…LSDVQNFPYM (259 aa)). Residues 29 to 37 (IGKGSFGKV) and lysine 52 contribute to the ATP site. Aspartate 146 acts as the Proton acceptor in catalysis. Positions 373–396 (KRQPNLALEQTKDPQGEDGQNNNL) are disordered.

It belongs to the protein kinase superfamily. Ser/Thr protein kinase family. It depends on Mg(2+) as a cofactor.

The protein localises to the cell membrane. The enzyme catalyses L-seryl-[protein] + ATP = O-phospho-L-seryl-[protein] + ADP + H(+). The catalysed reaction is L-threonyl-[protein] + ATP = O-phospho-L-threonyl-[protein] + ADP + H(+). The chain is Serine/threonine-protein kinase 32A (STK32A) from Homo sapiens (Human).